A 104-amino-acid polypeptide reads, in one-letter code: Large ribosomal subunit protein uL24 (104 aa).

The protein belongs to the universal ribosomal protein uL24 family. As to quaternary structure, part of the 50S ribosomal subunit.

Its function is as follows. One of two assembly initiator proteins, it binds directly to the 5'-end of the 23S rRNA, where it nucleates assembly of the 50S subunit. In terms of biological role, one of the proteins that surrounds the polypeptide exit tunnel on the outside of the subunit. The polypeptide is Large ribosomal subunit protein uL24 (Escherichia coli O81 (strain ED1a)).